A 33-amino-acid polypeptide reads, in one-letter code: DNA-directed RNA polymerase subunit beta' (33 aa).

The protein belongs to the RNA polymerase beta' chain family. RpoC1 subfamily. In plastids the minimal PEP RNA polymerase catalytic core is composed of four subunits: alpha, beta, beta', and beta''. When a (nuclear-encoded) sigma factor is associated with the core the holoenzyme is formed, which can initiate transcription.

The protein localises to the plastid. It localises to the chloroplast. It carries out the reaction RNA(n) + a ribonucleoside 5'-triphosphate = RNA(n+1) + diphosphate. Its function is as follows. DNA-dependent RNA polymerase catalyzes the transcription of DNA into RNA using the four ribonucleoside triphosphates as substrates. This is DNA-directed RNA polymerase subunit beta' (rpoC1) from Heterosigma akashiwo (Chromophytic alga).